A 255-amino-acid chain; its full sequence is Tail completion protein p143 (255 aa).

It localises to the virion. Its function is as follows. Putative role in tail stability. This Escherichia phage T5 (Enterobacteria phage T5) protein is Tail completion protein p143.